The sequence spans 34 residues: Calcitonin-like peptide 2 (34 aa).

Cysteine 2 and cysteine 7 are oxidised to a cystine. The residue at position 34 (phenylalanine 34) is a Phenylalanine amide.

The sequence is that of Calcitonin-like peptide 2 from Odorrana schmackeri (Schmacker's frog).